A 208-amino-acid polypeptide reads, in one-letter code: Large ribosomal subunit protein uL4 (208 aa).

A disordered region spans residues 58–77 (RGGGRKPWRQKGTGRARQGS). A compositionally biased stretch (basic residues) spans 60 to 71 (GGRKPWRQKGTG).

The protein belongs to the universal ribosomal protein uL4 family. As to quaternary structure, part of the 50S ribosomal subunit.

Functionally, one of the primary rRNA binding proteins, this protein initially binds near the 5'-end of the 23S rRNA. It is important during the early stages of 50S assembly. It makes multiple contacts with different domains of the 23S rRNA in the assembled 50S subunit and ribosome. In terms of biological role, forms part of the polypeptide exit tunnel. In Caldicellulosiruptor saccharolyticus (strain ATCC 43494 / DSM 8903 / Tp8T 6331), this protein is Large ribosomal subunit protein uL4.